We begin with the raw amino-acid sequence, 264 residues long: ATP synthase subunit b 1 (264 aa).

Residues 2 to 22 (LFDWFTFWAQLLNFLILVWLL) traverse the membrane as a helical segment. Positions 240-264 (ASSALLDGPDDEMNEEEGHAGKDAD) are disordered. The segment covering 255-264 (EEGHAGKDAD) has biased composition (basic and acidic residues).

It belongs to the ATPase B chain family. F-type ATPases have 2 components, F(1) - the catalytic core - and F(0) - the membrane proton channel. F(1) has five subunits: alpha(3), beta(3), gamma(1), delta(1), epsilon(1). F(0) has four main subunits: a(1), b(2) and c(10-14). The alpha and beta chains form an alternating ring which encloses part of the gamma chain. F(1) is attached to F(0) by a central stalk formed by the gamma and epsilon chains, while a peripheral stalk is formed by the delta and b chains.

The protein localises to the cell inner membrane. F(1)F(0) ATP synthase produces ATP from ADP in the presence of a proton or sodium gradient. F-type ATPases consist of two structural domains, F(1) containing the extramembraneous catalytic core and F(0) containing the membrane proton channel, linked together by a central stalk and a peripheral stalk. During catalysis, ATP synthesis in the catalytic domain of F(1) is coupled via a rotary mechanism of the central stalk subunits to proton translocation. In terms of biological role, component of the F(0) channel, it forms part of the peripheral stalk, linking F(1) to F(0). This Chlorobium luteolum (strain DSM 273 / BCRC 81028 / 2530) (Pelodictyon luteolum) protein is ATP synthase subunit b 1.